The sequence spans 311 residues: Homeobox-leucine zipper protein HOX13 (311 aa).

The segment at 1–74 (MKRPTSSSRK…PSCGLGEKKR (74 aa)) is disordered. Acidic residues predominate over residues 35-54 (DEAEMEEVDEEEEEEVDEDM). The homeobox DNA-binding region spans 69 to 128 (LGEKKRRLALEQVRALERSFDTDNKLDPDRKARIARDLGLQPRQVAVWFQNRRARWKTKQ). The tract at residues 127 to 171 (KQLERDFAALRARHDALRADCDALRRDKDALAAEIRELREKLPTK) is leucine-zipper.

It belongs to the HD-ZIP homeobox family. Class I subfamily. Expressed in seedlings, roots, stems, leaf sheaths and blades and panicles.

The protein resides in the nucleus. Its function is as follows. Probable transcription factor. The chain is Homeobox-leucine zipper protein HOX13 (HOX13) from Oryza sativa subsp. japonica (Rice).